The primary structure comprises 473 residues: GTPase Der (473 aa).

2 EngA-type G domains span residues 5–170 (PVVA…PNQE) and 178–351 (LKLA…QSSM). Residues 11-18 (GRPNVGKS), 58-62 (DTGGI), 123-126 (NKVD), 184-191 (GRPNVGKS), 231-235 (DTAGV), and 296-299 (NKWD) each bind GTP. Residues 352 to 436 (FEVSTNRLTQ…PLNVVFKLNE (85 aa)) form the KH-like domain. Residues 438–454 (PYANKSDTPTKAKTQQL) show a composition bias toward polar residues. The segment at 438-473 (PYANKSDTPTKAKTQQLRQRERNRAQKFTTKDKKPR) is disordered. The span at 455–473 (RQRERNRAQKFTTKDKKPR) shows a compositional bias: basic and acidic residues.

The protein belongs to the TRAFAC class TrmE-Era-EngA-EngB-Septin-like GTPase superfamily. EngA (Der) GTPase family. In terms of assembly, associates with the 50S ribosomal subunit.

Its function is as follows. GTPase that plays an essential role in the late steps of ribosome biogenesis. This Psychrobacter arcticus (strain DSM 17307 / VKM B-2377 / 273-4) protein is GTPase Der.